The primary structure comprises 199 residues: UPF0462 protein C4orf33 (199 aa).

This sequence belongs to the UPF0462 family.

This chain is UPF0462 protein C4orf33 (C4orf33), found in Homo sapiens (Human).